A 402-amino-acid polypeptide reads, in one-letter code: Speedy protein E2B (402 aa).

Residues 1–89 are disordered; the sequence is MDRTETRFRK…EEPEKELAPE (89 aa). Over residues 16-39 the composition is skewed to polar residues; the sequence is GKITTSRQPHPQNEQSPQRSTSGY. Acidic residues predominate over residues 76-89; sequence DESEEEPEKELAPE.

It belongs to the Speedy/Ringo family.

The polypeptide is Speedy protein E2B (SPDYE2B) (Homo sapiens (Human)).